Consider the following 317-residue polypeptide: HTH-type transcriptional regulator MetR (317 aa).

An HTH lysR-type domain is found at 1 to 59 (MIEVKHLKTLQALRNCGSLAAAAATLHQTQSALSHQFSDLEQRLGFRLFVRKSQPLRFT). Residues 19–38 (LAAAAATLHQTQSALSHQFS) constitute a DNA-binding region (H-T-H motif).

This sequence belongs to the LysR transcriptional regulatory family.

The protein resides in the cytoplasm. Control of the last step in methionine biosynthesis; MetR is a positive activator of the metA, metE and metH genes. It is also a negative regulator of its own expression. The sequence is that of HTH-type transcriptional regulator MetR (metR) from Escherichia coli O157:H7.